A 164-amino-acid polypeptide reads, in one-letter code: uncharacterized protein (164 aa).

The residue at position 117 (S117) is a Phosphoserine.

This is an uncharacterized protein from Bacillus subtilis (strain 168).